The following is a 465-amino-acid chain: UDP-glycosyltransferase TURAN (465 aa).

At 1–75 (MGKRGRACVV…FIQYFPKILY (75 aa)) the chain is on the cytoplasmic side. The helical transmembrane segment at 76-96 (PVTLLLKAFIQFTMLLWFLFV) threads the bilayer. Topologically, residues 97 to 465 (KVPAPDIFLV…TQVVSQIADS (369 aa)) are lumenal. N-linked (GlcNAc...) asparagine glycosylation occurs at Asn-238.

It belongs to the glycosyltransferase group 1 family. Glycosyltransferase 33 subfamily.

It localises to the endoplasmic reticulum membrane. It participates in protein modification; protein glycosylation. In terms of biological role, required for pollen tube (PT) growth and integrity by affecting the stability of the pollen-specific ANX1 and ANX2 proteins. Involved in protein N-glycosylation in the endoplasmic reticulum (ER), especially in the female gametophyte. Mediates PT reception in synergids through protein glycosylation. The chain is UDP-glycosyltransferase TURAN from Arabidopsis thaliana (Mouse-ear cress).